Reading from the N-terminus, the 421-residue chain is Aspartokinase (421 aa).

7–10 is an ATP binding site; it reads KYGG. Position 25–30 (25–30) interacts with substrate; it reads RIVATK. Ser41 contacts ATP. Substrate contacts are provided by residues 45 to 49, Glu74, 125 to 126, 151 to 154, and Ser154; these read DTTDE, LD, and RGGS. Residues 174 to 175, 180 to 185, and Lys210 each bind ATP; these read SD and YTADPR. 2 ACT domains span residues 267-343 and 349-421; these read VTVL…YDDQ and LVGA…GTGR. Residues Asp274, 274–279, 292–294, Gln298, 360–361, 374–375, and 381–382 each bind substrate; these read DKPGEA, NID, VT, NI, and SE.

The protein belongs to the aspartokinase family. In terms of assembly, tetramer consisting of 2 isoforms Alpha (catalytic and regulation) and of a homodimer of 2 isoforms Beta (regulation). The dimerization of the beta isoforms is stabilized by the bonding of threonine.

It catalyses the reaction L-aspartate + ATP = 4-phospho-L-aspartate + ADP. It functions in the pathway amino-acid biosynthesis; L-lysine biosynthesis via DAP pathway; (S)-tetrahydrodipicolinate from L-aspartate: step 1/4. The protein operates within amino-acid biosynthesis; L-methionine biosynthesis via de novo pathway; L-homoserine from L-aspartate: step 1/3. It participates in amino-acid biosynthesis; L-threonine biosynthesis; L-threonine from L-aspartate: step 1/5. Feedback inhibition by lysine and threonine, but he enzyme is moderately inhibited by lysine alone, and threonine alone has no effect. Catalyzes the phosphorylation of the beta-carboxyl group of aspartic acid with ATP to yield 4-phospho-L-aspartate, which is involved in the branched biosynthetic pathway leading to the biosynthesis of amino acids lysine, threonine, isoleucine and methionine. In Corynebacterium glutamicum (strain ATCC 13032 / DSM 20300 / JCM 1318 / BCRC 11384 / CCUG 27702 / LMG 3730 / NBRC 12168 / NCIMB 10025 / NRRL B-2784 / 534), this protein is Aspartokinase (lysC).